A 520-amino-acid chain; its full sequence is Maturase K (520 aa).

This sequence belongs to the intron maturase 2 family. MatK subfamily.

The protein resides in the plastid. The protein localises to the chloroplast. Functionally, usually encoded in the trnK tRNA gene intron. Probably assists in splicing its own and other chloroplast group II introns. This Galanthus elwesii (Giant snowdrop) protein is Maturase K.